Consider the following 128-residue polypeptide: Glycine cleavage system H protein (128 aa).

Positions 24–106 (VATVGITAFA…YNNGWLLKIK (83 aa)) constitute a Lipoyl-binding domain. Lys-65 is modified (N6-lipoyllysine).

This sequence belongs to the GcvH family. In terms of assembly, the glycine cleavage system is composed of four proteins: P, T, L and H. Requires (R)-lipoate as cofactor.

Its function is as follows. The glycine cleavage system catalyzes the degradation of glycine. The H protein shuttles the methylamine group of glycine from the P protein to the T protein. The sequence is that of Glycine cleavage system H protein from Acaryochloris marina (strain MBIC 11017).